A 336-amino-acid chain; its full sequence is Pyridoxal 5'-phosphate synthase subunit PdxS (336 aa).

Asp-62 serves as a coordination point for D-ribose 5-phosphate. The Schiff-base intermediate with D-ribose 5-phosphate role is filled by Lys-119. Position 191 (Gly-191) interacts with D-ribose 5-phosphate. Position 203 (Lys-203) interacts with D-glyceraldehyde 3-phosphate. D-ribose 5-phosphate contacts are provided by residues Gly-254 and 275–276 (GS).

Belongs to the PdxS/SNZ family. As to quaternary structure, in the presence of PdxT, forms a dodecamer of heterodimers.

It carries out the reaction aldehydo-D-ribose 5-phosphate + D-glyceraldehyde 3-phosphate + L-glutamine = pyridoxal 5'-phosphate + L-glutamate + phosphate + 3 H2O + H(+). It participates in cofactor biosynthesis; pyridoxal 5'-phosphate biosynthesis. Its function is as follows. Catalyzes the formation of pyridoxal 5'-phosphate from ribose 5-phosphate (RBP), glyceraldehyde 3-phosphate (G3P) and ammonia. The ammonia is provided by the PdxT subunit. Can also use ribulose 5-phosphate and dihydroxyacetone phosphate as substrates, resulting from enzyme-catalyzed isomerization of RBP and G3P, respectively. This Pyrobaculum calidifontis (strain DSM 21063 / JCM 11548 / VA1) protein is Pyridoxal 5'-phosphate synthase subunit PdxS.